The primary structure comprises 639 residues: Chaperone protein DnaK (639 aa).

T198 is subject to Phosphothreonine; by autocatalysis. Residues 603–618 (AKAQTQGGAQEGAAKQ) show a composition bias toward low complexity. The tract at residues 603–639 (AKAQTQGGAQEGAAKQSNATADDVVDAEFEEVKDDKK) is disordered. Acidic residues predominate over residues 625–639 (DVVDAEFEEVKDDKK).

This sequence belongs to the heat shock protein 70 family.

In terms of biological role, acts as a chaperone. This Shewanella sp. (strain ANA-3) protein is Chaperone protein DnaK.